The sequence spans 413 residues: Protein cycle (413 aa).

Residues Met1–Arg43 form a disordered region. Over residues Glu8–Asp19 the composition is skewed to acidic residues. Positions Glu20–Arg41 are enriched in basic and acidic residues. The bHLH domain occupies Asn30–Ile83. Positions Asp104–Pro175 constitute a PAS 1 domain. The interval Asn219 to Thr242 is disordered. In terms of domain architecture, PAS 2 spans Pro297 to Pro367. Positions Thr372–Leu413 constitute a PAC domain.

As to quaternary structure, efficient DNA binding requires dimerization with another bHLH protein. Forms a heterodimer with Clock in order to activate PER and TIM transcription. As to expression, expressed in head and ovary.

The protein localises to the nucleus. In terms of biological role, putative transcription factor involved in the generation of biological rhythms. Activates cycling transcription of Period (PER) and Timeless (TIM) by binding to the E-box (5'-CACGTG-3') present in their promoters. This is Protein cycle (cyc) from Drosophila melanogaster (Fruit fly).